A 182-amino-acid polypeptide reads, in one-letter code: Ribosome-recycling factor (182 aa).

Belongs to the RRF family.

The protein localises to the cytoplasm. Responsible for the release of ribosomes from messenger RNA at the termination of protein biosynthesis. May increase the efficiency of translation by recycling ribosomes from one round of translation to another. The sequence is that of Ribosome-recycling factor from Nostoc sp. (strain PCC 7120 / SAG 25.82 / UTEX 2576).